The primary structure comprises 259 residues: MLDTTKLTMVGTGSAFSKKFYNNSALVTFTNGYKLLIDCGHSVPKGLHDLGFPLESLDGILITHTHADHIGGLEEVALYNKFVLGGRKIDLLVPEPLVEPLWNDSLNGGLRYDDSRELELDDYFTVRSLKTSDCGAARTQIDENIAFTLYTTLHVSHMKSYAVGLIDRGEEKVFYSSDTVFDEYLLDYALTMFPWVFHDCQLFTGGVHASLDELLGYTRYIPEKQQNKIFLMHYGDNVEEFIGKTGRMRFAEQGREIIL.

Residues 21–233 form a beta-lactamase-like region; sequence YNNSALVTFT…KQQNKIFLMH (213 aa). The Zn(2+) site is built by H64, H66, D68, H69, H154, D178, and H233.

This sequence belongs to the anti-Pycsar protein Apyc1 family. In terms of assembly, homodimer. Requires Zn(2+) as cofactor.

It catalyses the reaction 3',5'-cyclic CMP + H2O = CMP + H(+). It carries out the reaction 3',5'-cyclic UMP + H2O = UMP + H(+). In terms of biological role, counteracts the host Pycsar antiviral defense system. Phosphodiesterase that enables metal-dependent hydrolysis of host cyclic nucleotide Pycsar defense signals such as cCMP and cUMP. The sequence is that of Anti-Pycsar protein Apyc1 from Bacillus phage vB_BveM-Goe7.